Reading from the N-terminus, the 207-residue chain is Uracil phosphoribosyltransferase (207 aa).

5-phospho-alpha-D-ribose 1-diphosphate is bound by residues Arg77, Arg102, and 129–137 (DPMVATGGS). Uracil contacts are provided by residues Ile192 and 197–199 (GDA). 5-phospho-alpha-D-ribose 1-diphosphate is bound at residue Asp198.

It belongs to the UPRTase family. The cofactor is Mg(2+).

It catalyses the reaction UMP + diphosphate = 5-phospho-alpha-D-ribose 1-diphosphate + uracil. It functions in the pathway pyrimidine metabolism; UMP biosynthesis via salvage pathway; UMP from uracil: step 1/1. Allosterically activated by GTP. Catalyzes the conversion of uracil and 5-phospho-alpha-D-ribose 1-diphosphate (PRPP) to UMP and diphosphate. The sequence is that of Uracil phosphoribosyltransferase from Mycobacterium bovis (strain ATCC BAA-935 / AF2122/97).